A 231-amino-acid polypeptide reads, in one-letter code: Potassium/proton antiporter CemA (231 aa).

4 consecutive transmembrane segments (helical) span residues 7-27 (FISL…SLSF), 116-136 (IISF…LIFL), 156-176 (ILLL…ELMI), and 191-211 (IISG…KYWI).

The protein belongs to the CemA family.

Its subcellular location is the plastid. It is found in the chloroplast inner membrane. The enzyme catalyses K(+)(in) + H(+)(out) = K(+)(out) + H(+)(in). Contributes to K(+)/H(+) antiport activity by supporting proton efflux to control proton extrusion and homeostasis in chloroplasts in a light-dependent manner to modulate photosynthesis. Prevents excessive induction of non-photochemical quenching (NPQ) under continuous-light conditions. Indirectly promotes efficient inorganic carbon uptake into chloroplasts. The chain is Potassium/proton antiporter CemA from Morus indica (Mulberry).